The sequence spans 156 residues: S-ribosylhomocysteine lyase (156 aa).

Fe cation-binding residues include histidine 56, histidine 60, and cysteine 123.

It belongs to the LuxS family. As to quaternary structure, homodimer. It depends on Fe cation as a cofactor.

The catalysed reaction is S-(5-deoxy-D-ribos-5-yl)-L-homocysteine = (S)-4,5-dihydroxypentane-2,3-dione + L-homocysteine. Functionally, involved in the synthesis of autoinducer 2 (AI-2) which is secreted by bacteria and is used to communicate both the cell density and the metabolic potential of the environment. The regulation of gene expression in response to changes in cell density is called quorum sensing. Catalyzes the transformation of S-ribosylhomocysteine (RHC) to homocysteine (HC) and 4,5-dihydroxy-2,3-pentadione (DPD). In Staphylococcus aureus (strain bovine RF122 / ET3-1), this protein is S-ribosylhomocysteine lyase.